Here is a 303-residue protein sequence, read N- to C-terminus: Tyrosine recombinase XerC (303 aa).

Residues 1-85 (MRADLDAFLE…ATRGLYQYLL (85 aa)) enclose the Core-binding (CB) domain. The Tyr recombinase domain maps to 106-285 (KLPRTLDADR…DFQHLASVYD (180 aa)). Catalysis depends on residues Arg146, Lys170, His237, Arg240, and His263. Tyr272 serves as the catalytic O-(3'-phospho-DNA)-tyrosine intermediate.

The protein belongs to the 'phage' integrase family. XerC subfamily. In terms of assembly, forms a cyclic heterotetrameric complex composed of two molecules of XerC and two molecules of XerD.

Its subcellular location is the cytoplasm. In terms of biological role, site-specific tyrosine recombinase, which acts by catalyzing the cutting and rejoining of the recombining DNA molecules. The XerC-XerD complex is essential to convert dimers of the bacterial chromosome into monomers to permit their segregation at cell division. It also contributes to the segregational stability of plasmids. The chain is Tyrosine recombinase XerC from Pseudomonas aeruginosa (strain LESB58).